Here is a 217-residue protein sequence, read N- to C-terminus: Small ribosomal subunit protein uS3 (217 aa).

The 71-residue stretch at 40–110 (IRDVINKGFN…EVYINIHEVR (71 aa)) folds into the KH type-2 domain.

This sequence belongs to the universal ribosomal protein uS3 family. As to quaternary structure, part of the 30S ribosomal subunit. Forms a tight complex with proteins S10 and S14.

Functionally, binds the lower part of the 30S subunit head. Binds mRNA in the 70S ribosome, positioning it for translation. The protein is Small ribosomal subunit protein uS3 of Rickettsia massiliae (strain Mtu5).